The primary structure comprises 115 residues: DNA-directed RNA polymerase II subunit RPB11-b2 (115 aa).

It belongs to the archaeal Rpo11/eukaryotic RPB11/RPC19 RNA polymerase subunit family. Component of the RNA polymerase II (Pol II) complex consisting of 12 subunits.

The protein localises to the nucleus. Functionally, DNA-dependent RNA polymerase catalyzes the transcription of DNA into RNA using the four ribonucleoside triphosphates as substrates. Component of RNA polymerase II which synthesizes mRNA precursors and many functional non-coding RNAs. Pol II is the central component of the basal RNA polymerase II transcription machinery. It is composed of mobile elements that move relative to each other. RPB11 is part of the core element with the central large cleft. This is DNA-directed RNA polymerase II subunit RPB11-b2 (POLR2J3) from Homo sapiens (Human).